Reading from the N-terminus, the 139-residue chain is D-ribose pyranase (139 aa).

H20 functions as the Proton donor in the catalytic mechanism. Residues D28, H106, and 128–130 (YAN) each bind substrate.

It belongs to the RbsD / FucU family. RbsD subfamily. Homodecamer.

Its subcellular location is the cytoplasm. The enzyme catalyses beta-D-ribopyranose = beta-D-ribofuranose. It functions in the pathway carbohydrate metabolism; D-ribose degradation; D-ribose 5-phosphate from beta-D-ribopyranose: step 1/2. Catalyzes the interconversion of beta-pyran and beta-furan forms of D-ribose. This is D-ribose pyranase from Histophilus somni (strain 2336) (Haemophilus somnus).